A 246-amino-acid polypeptide reads, in one-letter code: MKKSVGLIGNTGRMGGLLTEALRSHPRCLLGKGFSRRSQTLLKEVVLENDILIDFSAPEVTETLMDILLVTPKPVIIGTTGFSDNSVIRDKLSLLSEYVPVIFSPNMSLGAYVQRRLTACAAKLFDASYDVRILETHHRTKVDAISGTALSLAEAICSAKKDHFGDEQEPCIEMFGSRVGNIFGEHEVSFVGKNERFVIRHEAFSRQTFSDGVLIILRKIMEERLPAGYYTSDVLYESLFQEVVFD.

9 to 14 contacts NAD(+); that stretch reads GNTGRM. Arg36 contacts NADP(+). NAD(+) is bound by residues 78–80 and 104–107; these read GTT and SPNM. His137 serves as the catalytic Proton donor/acceptor. A (S)-2,3,4,5-tetrahydrodipicolinate-binding site is contributed by His138. Lys141 serves as the catalytic Proton donor. 147-148 lines the (S)-2,3,4,5-tetrahydrodipicolinate pocket; it reads GT.

This sequence belongs to the DapB family.

The protein resides in the cytoplasm. The enzyme catalyses (S)-2,3,4,5-tetrahydrodipicolinate + NAD(+) + H2O = (2S,4S)-4-hydroxy-2,3,4,5-tetrahydrodipicolinate + NADH + H(+). It catalyses the reaction (S)-2,3,4,5-tetrahydrodipicolinate + NADP(+) + H2O = (2S,4S)-4-hydroxy-2,3,4,5-tetrahydrodipicolinate + NADPH + H(+). The protein operates within amino-acid biosynthesis; L-lysine biosynthesis via DAP pathway; (S)-tetrahydrodipicolinate from L-aspartate: step 4/4. Functionally, catalyzes the conversion of 4-hydroxy-tetrahydrodipicolinate (HTPA) to tetrahydrodipicolinate. This Chlamydia muridarum (strain MoPn / Nigg) protein is 4-hydroxy-tetrahydrodipicolinate reductase.